The following is a 71-amino-acid chain: Vitellogenin-B1 (71 aa).

The N-terminal stretch at 1–15 (MRGIILAQLLALAGS) is a signal peptide. The region spanning 24-71 (FSESKPYVYNYEGIILNGIPENGLARSGIKLNCKAEISGYAQRSYMLK) is the Vitellogenin domain.

As to expression, produced by the liver, secreted into the blood and then sequestered by receptor mediated endocytosis into growing oocytes, where it is generally cleaved, giving rise to the respective yolk components.

Precursor of the major egg-yolk proteins that are sources of nutrients during early development of oviparous organisms. In Xenopus laevis (African clawed frog), this protein is Vitellogenin-B1.